Here is a 374-residue protein sequence, read N- to C-terminus: Methylthioribose-1-phosphate isomerase (374 aa).

The active-site Proton donor is aspartate 251.

Belongs to the eIF-2B alpha/beta/delta subunits family. MtnA subfamily.

It is found in the cytoplasm. The protein localises to the nucleus. The enzyme catalyses 5-(methylsulfanyl)-alpha-D-ribose 1-phosphate = 5-(methylsulfanyl)-D-ribulose 1-phosphate. It participates in amino-acid biosynthesis; L-methionine biosynthesis via salvage pathway; L-methionine from S-methyl-5-thio-alpha-D-ribose 1-phosphate: step 1/6. Catalyzes the interconversion of methylthioribose-1-phosphate (MTR-1-P) into methylthioribulose-1-phosphate (MTRu-1-P). This is Methylthioribose-1-phosphate isomerase from Oryza sativa subsp. indica (Rice).